The sequence spans 59 residues: Small ribosomal subunit protein bS21 (59 aa).

Positions 40 to 59 (KPSIKKRAKSKAALKYKKQR) are disordered.

Belongs to the bacterial ribosomal protein bS21 family.

The chain is Small ribosomal subunit protein bS21 from Protochlamydia amoebophila (strain UWE25).